Reading from the N-terminus, the 395-residue chain is Transcriptional coactivator yorkie (395 aa).

Positions 73–100 are disordered; the sequence is NSFFTPPAPSHSRANSADSTYDAGSQSS. Phosphoserine occurs at positions 82, 88, 100, 117, and 145. Positions 84–100 are enriched in polar residues; that stretch reads SRANSADSTYDAGSQSS. 2 disordered regions span residues 129-150 and 162-199; these read PSPQ…PASL and AAAA…PASS. Ser-146 is modified (phosphoserine; by CDK7). Ser-149 is modified (phosphoserine). Low complexity predominate over residues 162–179; that stretch reads AAAANNPNANPSSQQQPA. Phosphoserine is present on Ser-227. Tyr-228 is subject to Phosphotyrosine. Ser-232 carries the post-translational modification Phosphoserine. WW domains follow at residues 241–274 and 310–343; these read GALP…DPRI and GPLP…DPRM.

The protein belongs to the YAP1 family. Interacts (via WW domains) with wts. Interacts (via N-terminus) with sd (via C-terminus) and this interaction enhances the transcriptional activity of sd. The phosphorylated form interacts with 14-3-3epsilon and 14-3-3zeta. Interacts with Ack and ex. Post-translationally, its activity is regulated by multiple phosphorylation events. Phosphorylation at Ser-88, Ser-145 and Ser-227 negatively regulate its activity and restrict its nuclear localization. Wts-mediated phosphorylation at Ser-145 promotes interaction with 14-3-3epsilon and 14-3-3zeta. Phosphorylation at Ser-88 and Ser-227 regulate nuclear localization and activity independent of 14-3-3 association. Phosphorylation at Ser-146 by Cdk7 promotes its stability by preventing ubiquitination by the DCX(DCAF12) complex. Ubiquitinated by the DCX(DCAF12) complex, leading to its degradation. Phosphorylation at Ser-146 by Cdk7 prevents ubiquitination by the DCX(DCAF12) complex.

The protein localises to the cytoplasm. It localises to the nucleus. Its function is as follows. Transcriptional coactivator which is the critical downstream regulatory target in the Hippo/SWH (Sav/Wts/Hpo) signaling pathway that plays a pivotal role in organ size control and tumor suppression by restricting proliferation and promoting apoptosis. The core of this pathway is composed of a kinase cascade wherein Hippo (Hpo), in complex with its regulatory protein Salvador (Sav), phosphorylates and activates Warts (Wts) in complex with its regulatory protein Mats, which in turn phosphorylates and inactivates the Yorkie (Yki) oncoprotein. The Hippo/SWH signaling pathway inhibits the activity of the transcriptional complex formed by Scalloped (sd) and Yki and the target genes of this pathway include cyclin-E (cycE), diap1 and bantam. Regulates the expression of G1/S-specific CycE and diap1, thereby promoting cell proliferation and inhibiting apoptosis. Required for transcriptional activity of sd in wing imaginal disks. Induces expression of expression of vestigial (vg) in wing and haltere disks and the expression of transcription factor E2f (E2f). The chain is Transcriptional coactivator yorkie (yki) from Drosophila melanogaster (Fruit fly).